Consider the following 1025-residue polypeptide: Dihydropyrimidine dehydrogenase [NADP(+)] (1025 aa).

A propeptide spanning residues 1–3 (MAP) is cleaved from the precursor. The 4Fe-4S ferredoxin-type 1 domain occupies 69–100 (ERGALREAMRCLKCADAPCQKSCPTHLDIKSF). [4Fe-4S] cluster is bound by residues cysteine 79, cysteine 82, cysteine 87, and cysteine 91. Valine 129 contacts FAD. 4 residues coordinate [4Fe-4S] cluster: cysteine 130, cysteine 136, cysteine 140, and glutamine 156. FAD-binding positions include 194–198 (GAGPA), 218–226 (EKQEYVGGL), arginine 235, and leucine 261. Residues 340 to 343 (AGDT), 364 to 365 (RK), and arginine 371 contribute to the NADP(+) site. Lysine 384 bears the N6-acetyllysine mark. Residues 437 to 439 (AFG) and 481 to 487 (DIVGMAN) contribute to the NADP(+) site. Residue 480 to 489 (GDIVGMANTT) participates in FAD binding. FMN-binding positions include serine 550 and 574-575 (KT). Substrate contacts are provided by residues asparagine 609 and 668–670 (NLS). Cysteine 671 acts as the Proton acceptor in catalysis. Lysine 709 is a binding site for FMN. 736-737 (NT) contributes to the substrate binding site. FMN contacts are provided by residues glycine 767, 793-795 (TGG), and 816-817 (CS). 4Fe-4S ferredoxin-type domains are found at residues 944–976 (VVAVIDEEMCINCGKCYMTCNDSGYQAIQFDPE) and 978–1007 (HLPTVTDTCTGCTLCLSVCPIIDCIRMVSR). Residues cysteine 953, cysteine 956, cysteine 959, cysteine 963, cysteine 986, cysteine 989, cysteine 992, and cysteine 996 each contribute to the [4Fe-4S] cluster site.

It belongs to the dihydropyrimidine dehydrogenase family. As to quaternary structure, homodimer. The cofactor is FAD. Requires FMN as cofactor. [4Fe-4S] cluster is required as a cofactor.

The protein localises to the cytoplasm. The catalysed reaction is 5,6-dihydrouracil + NADP(+) = uracil + NADPH + H(+). It carries out the reaction 5,6-dihydrothymine + NADP(+) = thymine + NADPH + H(+). It participates in amino-acid biosynthesis; beta-alanine biosynthesis. With respect to regulation, inactivated by 5-iodouracil. Involved in pyrimidine base degradation. Catalyzes the reduction of uracil and thymine. In Sus scrofa (Pig), this protein is Dihydropyrimidine dehydrogenase [NADP(+)] (DPYD).